A 131-amino-acid polypeptide reads, in one-letter code: Small ribosomal subunit protein uS8 (131 aa).

This sequence belongs to the universal ribosomal protein uS8 family. Part of the 30S ribosomal subunit. Contacts proteins S5 and S12.

Its function is as follows. One of the primary rRNA binding proteins, it binds directly to 16S rRNA central domain where it helps coordinate assembly of the platform of the 30S subunit. This Alkalilimnicola ehrlichii (strain ATCC BAA-1101 / DSM 17681 / MLHE-1) protein is Small ribosomal subunit protein uS8.